A 497-amino-acid polypeptide reads, in one-letter code: MEMIIISLCLATILALLLLKQFLNRTYTAKVNLPPSPWRVPVIGNLHQLSLHPHRSLRSLSHRYGPLMLLHFGRVPVLVVSSSDVAHDLMKTHDLKVANRPQLKVVEKIFNGGREMVFSPYGEYWRQIKSVCIVNLLNKKKVQSFEKVREEEISEMMERVEKASSDSSPLNLSELLLTLTSDVTSRVSLGRKYSKEESMSDFKIQMRKITELVGGFPVGEYIPCLAWIDKLRGVDEKAEEVSKAFGDLMEKVLQEHLDATDKPTLDFVDVLLSLERHERNGVQIRRSDIKFLILDMFLAGTETTYALLEWIMTELIRHPECMKKLQDEIRAKATKLILYISEEDVEDMKYLKAVVKEVLRLHPPLPLLVPRELSEDIKLKGYDIAAGTQVIINAWAIQRDTMTWGIDAEEFRPERHLDSLVDFRGTNFEFIPFGSGRRICPGIGFAMALVEVTLANLVNRFNWRMEVQHSGDEYDLAESTGLDVCRKFPLIVFPSPA.

A helical transmembrane segment spans residues 3-23 (MIIISLCLATILALLLLKQFL). Residue Cys440 coordinates heme.

The protein belongs to the cytochrome P450 family. Heme serves as cofactor.

The protein localises to the membrane. This chain is Cytochrome P450 71A14 (CYP71A14), found in Arabidopsis thaliana (Mouse-ear cress).